Reading from the N-terminus, the 330-residue chain is Aspartate--ammonia ligase (330 aa).

It belongs to the class-II aminoacyl-tRNA synthetase family. AsnA subfamily.

It is found in the cytoplasm. The enzyme catalyses L-aspartate + NH4(+) + ATP = L-asparagine + AMP + diphosphate + H(+). Its pathway is amino-acid biosynthesis; L-asparagine biosynthesis; L-asparagine from L-aspartate (ammonia route): step 1/1. The sequence is that of Aspartate--ammonia ligase from Escherichia coli O81 (strain ED1a).